Here is a 288-residue protein sequence, read N- to C-terminus: CBY1-interacting BAR domain-containing protein 2 (288 aa).

The segment at 6-217 (SRDSQVRVME…ESYDLEKDLE (212 aa)) is BAR-like. 2 disordered regions span residues 133–157 (QKSPSDRQTISQAETSVQRASVDAS) and 256–288 (TIRSQRKEAVSEDDSAEEDPVEDLRGQAQRLNQ). The segment covering 138–157 (DRQTISQAETSVQRASVDAS) has biased composition (polar residues). Residues 266-276 (SEDDSAEEDPV) show a composition bias toward acidic residues.

It belongs to the CIBAR family. Homodimer (via BAR-like domain). Heterodimer (via BAR-like domain) with FAM92A. Interacts with CBY1.

It localises to the cytoplasm. The protein localises to the cytoskeleton. It is found in the microtubule organizing center. The protein resides in the centrosome. Its subcellular location is the centriole. It localises to the cilium basal body. Its function is as follows. May play a role in ciliogenesis. In cooperation with CBY1 may facilitate ciliogenesis likely by the recruitment and fusion of endosomal vesicles at distal appendages during early stages of ciliogenesis. The protein is CBY1-interacting BAR domain-containing protein 2 (CIBAR2) of Bos taurus (Bovine).